We begin with the raw amino-acid sequence, 266 residues long: Ribosomal RNA small subunit methyltransferase A (266 aa).

Residues H13, L15, G40, E61, D85, and N104 each coordinate S-adenosyl-L-methionine.

It belongs to the class I-like SAM-binding methyltransferase superfamily. rRNA adenine N(6)-methyltransferase family. RsmA subfamily.

The protein localises to the cytoplasm. The enzyme catalyses adenosine(1518)/adenosine(1519) in 16S rRNA + 4 S-adenosyl-L-methionine = N(6)-dimethyladenosine(1518)/N(6)-dimethyladenosine(1519) in 16S rRNA + 4 S-adenosyl-L-homocysteine + 4 H(+). Functionally, specifically dimethylates two adjacent adenosines (A1518 and A1519) in the loop of a conserved hairpin near the 3'-end of 16S rRNA in the 30S particle. May play a critical role in biogenesis of 30S subunits. This is Ribosomal RNA small subunit methyltransferase A from Parabacteroides distasonis (strain ATCC 8503 / DSM 20701 / CIP 104284 / JCM 5825 / NCTC 11152).